A 276-amino-acid polypeptide reads, in one-letter code: Pantothenate synthetase (276 aa).

26 to 33 contributes to the ATP binding site; the sequence is MGYLHEGH. The active-site Proton donor is histidine 33. Glutamine 57 serves as a coordination point for (R)-pantoate. Glutamine 57 contacts beta-alanine. 142–145 is a binding site for ATP; that stretch reads GLKD. Residue glutamine 148 participates in (R)-pantoate binding. ATP contacts are provided by residues isoleucine 171 and 179–182; that span reads KSSR.

This sequence belongs to the pantothenate synthetase family. As to quaternary structure, homodimer.

It localises to the cytoplasm. It carries out the reaction (R)-pantoate + beta-alanine + ATP = (R)-pantothenate + AMP + diphosphate + H(+). Its pathway is cofactor biosynthesis; (R)-pantothenate biosynthesis; (R)-pantothenate from (R)-pantoate and beta-alanine: step 1/1. In terms of biological role, catalyzes the condensation of pantoate with beta-alanine in an ATP-dependent reaction via a pantoyl-adenylate intermediate. The chain is Pantothenate synthetase from Exiguobacterium sp. (strain ATCC BAA-1283 / AT1b).